The sequence spans 373 residues: NAD-dependent protein deacetylase SIR2rp1 (373 aa).

The Deacetylase sirtuin-type domain maps to 12–349; it reads HALGEPTVEG…LKLAECLGLR (338 aa). Residues 39-59 and 124-127 each bind NAD(+); these read GAGA…TGIY and QNID. The active-site Proton acceptor is H144. The Zn(2+) site is built by C152, C155, C176, and C179. NAD(+) is bound by residues 216-218 and 241-243; these read GTS and NRE. A disordered region spans residues 263-313; the sequence is DAVAKEGRSSSSQSRSPSASARREEGGTEDGSSSPNEEVEDASTSSSSDGY. The span at 271-282 shows a compositional bias: low complexity; the sequence is SSSSQSRSPSAS. C335 serves as a coordination point for NAD(+).

This sequence belongs to the sirtuin family. Class I subfamily. Zn(2+) serves as cofactor.

The protein resides in the nucleus. The enzyme catalyses N(6)-acetyl-L-lysyl-[protein] + NAD(+) + H2O = 2''-O-acetyl-ADP-D-ribose + nicotinamide + L-lysyl-[protein]. Functionally, NAD-dependent deacetylase, which probably acts as a regulator of gene expression believed to help form modified chromatin structures on the genes it regulates. This is NAD-dependent protein deacetylase SIR2rp1 (SIR2rp1) from Leishmania major.